An 842-amino-acid chain; its full sequence is Glucans biosynthesis glucosyltransferase H (842 aa).

Helical transmembrane passes span 140–160 (ILLL…KTIL), 194–214 (ILIL…TALM), 513–533 (VFLT…FLAL), 568–588 (IALF…SIIL), 615–635 (VLLA…AFLG), 656–676 (FMRH…MAWL), and 680–700 (FLFW…VSAI).

This sequence belongs to the glycosyltransferase 2 family. OpgH subfamily.

The protein resides in the cell inner membrane. The protein operates within glycan metabolism; osmoregulated periplasmic glucan (OPG) biosynthesis. Functionally, involved in the biosynthesis of osmoregulated periplasmic glucans (OPGs). This chain is Glucans biosynthesis glucosyltransferase H, found in Klebsiella pneumoniae subsp. pneumoniae (strain ATCC 700721 / MGH 78578).